The primary structure comprises 425 residues: Serine--tRNA ligase (425 aa).

Position 228-230 (228-230 (TAE)) interacts with L-serine. Residue 259–261 (RSE) participates in ATP binding. Glu282 contacts L-serine. Position 346 to 349 (346 to 349 (EIAS)) interacts with ATP. Ser382 contributes to the L-serine binding site.

The protein belongs to the class-II aminoacyl-tRNA synthetase family. Type-1 seryl-tRNA synthetase subfamily. As to quaternary structure, homodimer. The tRNA molecule binds across the dimer.

The protein localises to the cytoplasm. It catalyses the reaction tRNA(Ser) + L-serine + ATP = L-seryl-tRNA(Ser) + AMP + diphosphate + H(+). It carries out the reaction tRNA(Sec) + L-serine + ATP = L-seryl-tRNA(Sec) + AMP + diphosphate + H(+). It participates in aminoacyl-tRNA biosynthesis; selenocysteinyl-tRNA(Sec) biosynthesis; L-seryl-tRNA(Sec) from L-serine and tRNA(Sec): step 1/1. In terms of biological role, catalyzes the attachment of serine to tRNA(Ser). Is also able to aminoacylate tRNA(Sec) with serine, to form the misacylated tRNA L-seryl-tRNA(Sec), which will be further converted into selenocysteinyl-tRNA(Sec). The sequence is that of Serine--tRNA ligase from Rickettsia prowazekii (strain Madrid E).